A 316-amino-acid polypeptide reads, in one-letter code: UPF0324 membrane protein SO_4708 (316 aa).

9 helical membrane-spanning segments follow: residues 61–80 (LLSY…AAIE), 85–107 (NLGL…TRAL), 114–136 (GHLI…APAV), 146–168 (ALAC…GHLL), 175–197 (FGVW…SAYG), 207–226 (IKLA…ALIF), 233–252 (LNLP…AHWL), 262–281 (LFMV…GAGI), and 293–315 (PLLL…ILYF).

It belongs to the UPF0324 family.

The protein resides in the cell membrane. The sequence is that of UPF0324 membrane protein SO_4708 from Shewanella oneidensis (strain ATCC 700550 / JCM 31522 / CIP 106686 / LMG 19005 / NCIMB 14063 / MR-1).